Consider the following 416-residue polypeptide: Creatine kinase U-type, mitochondrial (416 aa).

Residues 1–39 constitute a mitochondrion transit peptide; it reads MAGPFSRLLSARPGLRLLALAGAGSLAAGFLLRPEPIRA. The tract at residues 40-63 is cardiolipin-binding; that stretch reads ASERRRQYPPSAEYPDLRKHNNCM. In terms of domain architecture, Phosphagen kinase N-terminal spans 44 to 131; the sequence is RRQYPPSAEY…FDPVIQERHN (88 aa). At S151 the chain carries Phosphoserine. A Phosphagen kinase C-terminal domain is found at 158–400; sequence YVLSSRVRTG…NYLIDCERRL (243 aa). Residue 161–165 participates in ATP binding; that stretch reads SSRVR. Residue S196 is modified to Phosphoserine. Residue T213 is modified to Phosphothreonine. H224 is an ATP binding site. S232 carries the phosphoserine modification. ATP is bound by residues R269, R325, and 353–358; that span reads RGTGGV. T355 is subject to Phosphothreonine. A Phosphoserine modification is found at S365. Residue D368 coordinates ATP.

This sequence belongs to the ATP:guanido phosphotransferase family. Exists as an octamer composed of four MTCK homodimers.

Its subcellular location is the mitochondrion inner membrane. It carries out the reaction creatine + ATP = N-phosphocreatine + ADP + H(+). Its function is as follows. Reversibly catalyzes the transfer of phosphate between ATP and various phosphogens (e.g. creatine phosphate). Creatine kinase isoenzymes play a central role in energy transduction in tissues with large, fluctuating energy demands, such as skeletal muscle, heart, brain and spermatozoa. This Sus scrofa (Pig) protein is Creatine kinase U-type, mitochondrial (CKMT1).